The primary structure comprises 156 residues: Crossover junction endodeoxyribonuclease RuvC (156 aa).

Active-site residues include aspartate 7, glutamate 66, and aspartate 138. 3 residues coordinate Mg(2+): aspartate 7, glutamate 66, and aspartate 138.

The protein belongs to the RuvC family. Homodimer which binds Holliday junction (HJ) DNA. The HJ becomes 2-fold symmetrical on binding to RuvC with unstacked arms; it has a different conformation from HJ DNA in complex with RuvA. In the full resolvosome a probable DNA-RuvA(4)-RuvB(12)-RuvC(2) complex forms which resolves the HJ. The cofactor is Mg(2+).

The protein resides in the cytoplasm. It carries out the reaction Endonucleolytic cleavage at a junction such as a reciprocal single-stranded crossover between two homologous DNA duplexes (Holliday junction).. In terms of biological role, the RuvA-RuvB-RuvC complex processes Holliday junction (HJ) DNA during genetic recombination and DNA repair. Endonuclease that resolves HJ intermediates. Cleaves cruciform DNA by making single-stranded nicks across the HJ at symmetrical positions within the homologous arms, yielding a 5'-phosphate and a 3'-hydroxyl group; requires a central core of homology in the junction. The consensus cleavage sequence is 5'-(A/T)TT(C/G)-3'. Cleavage occurs on the 3'-side of the TT dinucleotide at the point of strand exchange. HJ branch migration catalyzed by RuvA-RuvB allows RuvC to scan DNA until it finds its consensus sequence, where it cleaves and resolves the cruciform DNA. The polypeptide is Crossover junction endodeoxyribonuclease RuvC (Ehrlichia chaffeensis (strain ATCC CRL-10679 / Arkansas)).